The primary structure comprises 688 residues: MPVSEAFAKLCVNEKPPAESAVAVKSLVFKPKTPKSATPVPIVVVALQSTTTPSALIANATSSKDPRLARDDLVKQAFQSESARAFILGDLANATSNFHLLIDHELGTVDGDTILQLNDSTYMKKSDMMKFLNNFEDSQKVVDFSQEVSKETATEGKKQQKKQQPSKAGTAAAAAAAALEDAKLIGITVDKALDFPGWYQQILTKGEMLDYYDVSGCYILRPPSYAIWENIQKWFDDKIKAIGVQNAYFPMFVSSRVLEKEKDHVEGFAPEVAWVTRAGSSELEEPIAIRPTSETVMYPYYAKWVQSYRDLPLKLNQWNSVVRWEFKHPQPFLRTREFLWQEGHTAHLTAKDAEEEVLQILDFYAGVYEELLAVPVVKGRKTEKEKFAGGDFTTTCEGYIPQTGRGIQGATSHHLGQNFSKMFNLSVENPLGSDHPKIFAYQNSWGLSTRVIGVMVMIHSDNKGLVIPPRVSQFQSVVIPVGITKKTSEEQRKHIHETARSVESRLKKVGIRAFGDYNDNYTPGWKFSQYELKGIPIRIELGPKDIEKNQVVVVRRNDSKKYVVSFDELEARIPEILEEMQGDLFKKAKELFDTHRVIVNEWSGFVPALNKKNVILAPWCGVMECEEDIKESSAKKDDGEEFEEDDKAPSMGAKSLCIPFDQPVLNEGQKCIKCERIAVNYCMFGRSY.

Phosphoserine is present on serine 149. Threonine 170 is subject to Phosphothreonine. Residues 631–650 are disordered; the sequence is ESSAKKDDGEEFEEDDKAPS. At serine 655 the chain carries Phosphoserine.

It belongs to the class-II aminoacyl-tRNA synthetase family.

It carries out the reaction tRNA(Pro) + L-proline + ATP = L-prolyl-tRNA(Pro) + AMP + diphosphate. The polypeptide is Putative proline--tRNA ligase YHR020W (Saccharomyces cerevisiae (strain ATCC 204508 / S288c) (Baker's yeast)).